The following is a 340-amino-acid chain: Protein-arginine kinase (340 aa).

Positions 21 to 242 constitute a Phosphagen kinase C-terminal domain; the sequence is VVLSSRIRLA…EQIIMQERIA (222 aa). Residues 24–28, His79, Arg113, 164–168, and 195–200 contribute to the ATP site; these read SSRIR, RASVM, and RGIYGE.

This sequence belongs to the ATP:guanido phosphotransferase family.

It carries out the reaction L-arginyl-[protein] + ATP = N(omega)-phospho-L-arginyl-[protein] + ADP + H(+). In terms of biological role, catalyzes the specific phosphorylation of arginine residues in proteins. The protein is Protein-arginine kinase of Listeria monocytogenes serotype 4a (strain HCC23).